A 204-amino-acid polypeptide reads, in one-letter code: Thymidine kinase (204 aa).

ATP-binding positions include 23 to 30 (GSMFSGKT) and 95 to 98 (DEAQ). The active-site Proton acceptor is the glutamate 96. Residues cysteine 152, cysteine 155, cysteine 184, and cysteine 187 each contribute to the Zn(2+) site.

Belongs to the thymidine kinase family. As to quaternary structure, homotetramer.

It is found in the cytoplasm. It catalyses the reaction thymidine + ATP = dTMP + ADP + H(+). The chain is Thymidine kinase from Porphyromonas gingivalis (strain ATCC 33277 / DSM 20709 / CIP 103683 / JCM 12257 / NCTC 11834 / 2561).